The sequence spans 333 residues: Adenosine deaminase (333 aa).

His-12 and His-14 together coordinate Zn(2+). Residues His-14, Asp-16, and Gly-170 each coordinate substrate. Position 197 (His-197) interacts with Zn(2+). Glu-200 acts as the Proton donor in catalysis. Residue Asp-278 participates in Zn(2+) binding. Asp-279 lines the substrate pocket.

Belongs to the metallo-dependent hydrolases superfamily. Adenosine and AMP deaminases family. Adenosine deaminase subfamily. It depends on Zn(2+) as a cofactor.

It carries out the reaction adenosine + H2O + H(+) = inosine + NH4(+). The catalysed reaction is 2'-deoxyadenosine + H2O + H(+) = 2'-deoxyinosine + NH4(+). In terms of biological role, catalyzes the hydrolytic deamination of adenosine and 2-deoxyadenosine. This Escherichia coli O7:K1 (strain IAI39 / ExPEC) protein is Adenosine deaminase.